We begin with the raw amino-acid sequence, 287 residues long: Bifunctional protein FolD (287 aa).

Residues 160–162 (GRS), serine 189, and isoleucine 230 each bind NADP(+).

This sequence belongs to the tetrahydrofolate dehydrogenase/cyclohydrolase family. As to quaternary structure, homodimer.

It carries out the reaction (6R)-5,10-methylene-5,6,7,8-tetrahydrofolate + NADP(+) = (6R)-5,10-methenyltetrahydrofolate + NADPH. It catalyses the reaction (6R)-5,10-methenyltetrahydrofolate + H2O = (6R)-10-formyltetrahydrofolate + H(+). It participates in one-carbon metabolism; tetrahydrofolate interconversion. Catalyzes the oxidation of 5,10-methylenetetrahydrofolate to 5,10-methenyltetrahydrofolate and then the hydrolysis of 5,10-methenyltetrahydrofolate to 10-formyltetrahydrofolate. The chain is Bifunctional protein FolD from Chlamydia felis (strain Fe/C-56) (Chlamydophila felis).